Here is a 396-residue protein sequence, read N- to C-terminus: Elongation factor Tu (396 aa).

The tr-type G domain occupies 10-206 (KPHVNIGTIG…AVDSYIPDPE (197 aa)). Residues 19–26 (GHVDHGKT) form a G1 region. GTP is bound at residue 19–26 (GHVDHGKT). Residue threonine 26 coordinates Mg(2+). The tract at residues 60–64 (GITIA) is G2. A G3 region spans residues 81–84 (DCPG). Residues 81 to 85 (DCPGH) and 136 to 139 (NKAD) contribute to the GTP site. The G4 stretch occupies residues 136 to 139 (NKAD). The segment at 174–176 (SAL) is G5.

It belongs to the TRAFAC class translation factor GTPase superfamily. Classic translation factor GTPase family. EF-Tu/EF-1A subfamily. Monomer.

Its subcellular location is the cytoplasm. It catalyses the reaction GTP + H2O = GDP + phosphate + H(+). Functionally, GTP hydrolase that promotes the GTP-dependent binding of aminoacyl-tRNA to the A-site of ribosomes during protein biosynthesis. The chain is Elongation factor Tu from Pelobacter propionicus (strain DSM 2379 / NBRC 103807 / OttBd1).